Here is a 432-residue protein sequence, read N- to C-terminus: UDP-N-acetylmuramoylalanine--D-glutamate ligase (432 aa).

Position 98–104 (98–104) interacts with ATP; the sequence is GTNGKST.

The protein belongs to the MurCDEF family.

It is found in the cytoplasm. It carries out the reaction UDP-N-acetyl-alpha-D-muramoyl-L-alanine + D-glutamate + ATP = UDP-N-acetyl-alpha-D-muramoyl-L-alanyl-D-glutamate + ADP + phosphate + H(+). The protein operates within cell wall biogenesis; peptidoglycan biosynthesis. Cell wall formation. Catalyzes the addition of glutamate to the nucleotide precursor UDP-N-acetylmuramoyl-L-alanine (UMA). This chain is UDP-N-acetylmuramoylalanine--D-glutamate ligase, found in Fusobacterium nucleatum subsp. nucleatum (strain ATCC 25586 / DSM 15643 / BCRC 10681 / CIP 101130 / JCM 8532 / KCTC 2640 / LMG 13131 / VPI 4355).